The following is a 403-amino-acid chain: Argininosuccinate synthase 1 (403 aa).

Residues 10 to 18 (SYSGGLDTS) and Ala-37 each bind ATP. Residues Tyr-88 and Ser-93 each coordinate L-citrulline. Position 118 (Gly-118) interacts with ATP. The L-aspartate site is built by Thr-120, Asn-124, and Asp-125. Asn-124 contacts L-citrulline. L-citrulline contacts are provided by Arg-128, Ser-179, Ser-188, Glu-264, and Tyr-276.

The protein belongs to the argininosuccinate synthase family. Type 1 subfamily. In terms of assembly, homotetramer.

Its subcellular location is the cytoplasm. The catalysed reaction is L-citrulline + L-aspartate + ATP = 2-(N(omega)-L-arginino)succinate + AMP + diphosphate + H(+). Its pathway is amino-acid biosynthesis; L-arginine biosynthesis; L-arginine from L-ornithine and carbamoyl phosphate: step 2/3. The protein is Argininosuccinate synthase 1 of Rhizobium johnstonii (strain DSM 114642 / LMG 32736 / 3841) (Rhizobium leguminosarum bv. viciae).